A 125-amino-acid chain; its full sequence is Snaclec botrocetin subunit beta (125 aa).

3 disulfide bridges follow: C2–C13, C30–C121, and C98–C113. The region spanning 9 to 122 (YEGHCYRFFK…CTRFKNFVCE (114 aa)) is the C-type lectin domain.

This sequence belongs to the snaclec family. In terms of assembly, heterodimer of subunits alpha and beta; disulfide-linked. Botrocetin and vWF form a soluble complex. As to expression, expressed by the venom gland.

Its subcellular location is the secreted. In terms of biological role, snaclec that binds to von Willebrand factor (VWF) and induces its interaction with GPIbalpha (GP1BA) (via the vWF A1 domain), resulting in platelet aggregation. In Bothrops jararaca (Jararaca), this protein is Snaclec botrocetin subunit beta.